The sequence spans 440 residues: Ferredoxin--NADP reductase (440 aa).

Residues 17–75 (SRVFVYEVVGMRQNEETDQTNYPIRKSGSVFIRVPYNRMNQEMQRITRLGGKIVSIQTV) enclose the CpcD-like domain. The segment at 93–142 (ASSETAKSEGNGKATPVKTDSGAKGFAKPPAEEQLKKKDNKGNTMTQAKA) is disordered. Residues 122-133 (PAEEQLKKKDNK) are compositionally biased toward basic and acidic residues. Residues 155-279 (NAPFIGKVIS…TGPVGKEMLL (125 aa)) enclose the FAD-binding FR-type domain. FAD is bound by residues 214–217 (RLYS), 235–237 (CVR), tyrosine 241, 253–255 (VCS), and threonine 294. Residues serine 217 and arginine 237 each contribute to the NADP(+) site. NADP(+)-binding positions include threonine 294, 330–331 (VP), 360–361 (SR), 370–374 (RMYIQ), 399–400 (GL), and glutamate 438.

This sequence belongs to the ferredoxin--NADP reductase type 1 family. FAD serves as cofactor.

The protein resides in the cellular thylakoid membrane. It catalyses the reaction 2 reduced [2Fe-2S]-[ferredoxin] + NADP(+) + H(+) = 2 oxidized [2Fe-2S]-[ferredoxin] + NADPH. This is Ferredoxin--NADP reductase (petH) from Trichormus variabilis (strain ATCC 29413 / PCC 7937) (Anabaena variabilis).